The primary structure comprises 574 residues: MVNHLAGMFGSAVGMMSNSRARALEIFTEITNYDESACDAWVGRIGCGDTDRVTLFRAWYSRSNFGQLAGAAEISMNGVGARIPIGGIYSRDITYPINSPLAITMGFAVHEASEGNYTDAMEALEDAPAAGSEHLVSWVRAVIYGAGQRWTEVIDQVRGAERWPDKFLAAAAGVAHGVAAANLGLFTEADRRLTEANDTPVAQACAPVIAWYLAMARRSQGNEESAQVLLEWLQANFPEPKVTAALRDPAYRLETTTAEKIAARSDPWDPSSVVADTSARDKLLVEAQAELDRQIGLGRVKEQIEAYRAATQMARIRAARGMKVAQTSKHMIFAGPPGTGKTTIARVVANILAGLGVIAEPKLIETSRKDFVAEYEGQSAVKTSKTIDRALGGVLFIDEAYTLVQERNGQTDPFGAEALDTLLARMENDRDRLVVIIAGYSNDIDRLLEVNDGLRSRFATRIEFDSYSPDEIVEISKVIATANDSRLDDTAAKRVLEAATTLSQRSLNGKPALDIAGNGRYARQLVEAGEQNRDMRLARSLDFDSLGVDQLSEINGDDMAAAIASVHSRLNIGE.

335–342 (GPPGTGKT) is a binding site for ATP.

The protein belongs to the CbxX/CfxQ family. As to quaternary structure, part of the ESX-1 / type VII secretion system (T7SS), which is composed of cytosolic and membrane components.

The protein resides in the cytoplasm. Part of the ESX-1 / type VII specialized secretion system (T7SS), which exports several proteins including EsxA and EsxB. Plays a role in DNA conjugation, in both donor and recipient strains. EccA1 exhibits ATPase activity and may provide energy for the export of ESX-1 substrates. The polypeptide is ESX-1 secretion system protein EccA1 (Mycolicibacterium smegmatis (strain ATCC 700084 / mc(2)155) (Mycobacterium smegmatis)).